We begin with the raw amino-acid sequence, 414 residues long: Alanine--glyoxylate aminotransferase (414 aa).

A mitochondrion-targeting transit peptide spans 1 to 23 (MFRMLAKASVTLGSRAASWVRNM). Residue K231 is modified to N6-(pyridoxal phosphate)lysine. K247 is subject to N6-acetyllysine; alternate. N6-succinyllysine; alternate is present on K247. 2 positions are modified to N6-acetyllysine: K256 and K334. R382 provides a ligand contact to substrate. The Microbody targeting signal signature appears at 412–414 (NKL).

Belongs to the class-V pyridoxal-phosphate-dependent aminotransferase family. In terms of assembly, homodimer. Pyridoxal 5'-phosphate is required as a cofactor.

It is found in the peroxisome. The protein localises to the mitochondrion matrix. It carries out the reaction L-serine + pyruvate = 3-hydroxypyruvate + L-alanine. The enzyme catalyses glyoxylate + L-alanine = glycine + pyruvate. Catalyzes the transamination of glyoxylate to glycine and contributes to the glyoxylate detoxification. Its function is as follows. Catalyzes the transamination between L-serine and pyruvate and weakly contributes to gluconeogenesis from the L-serine metabolism. The protein is Alanine--glyoxylate aminotransferase of Rattus norvegicus (Rat).